The following is a 499-amino-acid chain: Lysine--tRNA ligase (499 aa).

E409 and E416 together coordinate Mg(2+).

Belongs to the class-II aminoacyl-tRNA synthetase family. In terms of assembly, homodimer. Mg(2+) serves as cofactor.

The protein localises to the cytoplasm. The enzyme catalyses tRNA(Lys) + L-lysine + ATP = L-lysyl-tRNA(Lys) + AMP + diphosphate. In Thioalkalivibrio sulfidiphilus (strain HL-EbGR7), this protein is Lysine--tRNA ligase.